The chain runs to 288 residues: Homoserine kinase (288 aa).

79–89 (PPARGLGSSSA) contributes to the ATP binding site.

It belongs to the GHMP kinase family. Homoserine kinase subfamily.

The protein localises to the cytoplasm. The enzyme catalyses L-homoserine + ATP = O-phospho-L-homoserine + ADP + H(+). Its pathway is amino-acid biosynthesis; L-threonine biosynthesis; L-threonine from L-aspartate: step 4/5. Catalyzes the ATP-dependent phosphorylation of L-homoserine to L-homoserine phosphate. The polypeptide is Homoserine kinase (Listeria monocytogenes serotype 4b (strain CLIP80459)).